The sequence spans 380 residues: Erythronate-4-phosphate dehydrogenase (380 aa).

Substrate contacts are provided by serine 45 and threonine 66. A disulfide bridge connects residues cysteine 65 and cysteine 90. NAD(+) is bound by residues 126–127 (QV), aspartate 146, threonine 175, 206–208 (ASR), and aspartate 232. The active site involves arginine 208. Glutamate 237 is a catalytic residue. Histidine 254 (proton donor) is an active-site residue. NAD(+) is bound at residue glycine 257. Tyrosine 258 provides a ligand contact to substrate.

This sequence belongs to the D-isomer specific 2-hydroxyacid dehydrogenase family. PdxB subfamily. In terms of assembly, homodimer.

The protein resides in the cytoplasm. The catalysed reaction is 4-phospho-D-erythronate + NAD(+) = (R)-3-hydroxy-2-oxo-4-phosphooxybutanoate + NADH + H(+). It functions in the pathway cofactor biosynthesis; pyridoxine 5'-phosphate biosynthesis; pyridoxine 5'-phosphate from D-erythrose 4-phosphate: step 2/5. Functionally, catalyzes the oxidation of erythronate-4-phosphate to 3-hydroxy-2-oxo-4-phosphonooxybutanoate. This Pseudomonas aeruginosa (strain ATCC 15692 / DSM 22644 / CIP 104116 / JCM 14847 / LMG 12228 / 1C / PRS 101 / PAO1) protein is Erythronate-4-phosphate dehydrogenase.